Here is a 212-residue protein sequence, read N- to C-terminus: UPF0319 protein PBPRA2789 (212 aa).

A signal peptide spans Met1–Ala21.

Belongs to the UPF0319 family.

The protein is UPF0319 protein PBPRA2789 of Photobacterium profundum (strain SS9).